Here is a 107-residue protein sequence, read N- to C-terminus: Phosphoribosyl-ATP pyrophosphatase (107 aa).

It belongs to the PRA-PH family.

The protein resides in the cytoplasm. It carries out the reaction 1-(5-phospho-beta-D-ribosyl)-ATP + H2O = 1-(5-phospho-beta-D-ribosyl)-5'-AMP + diphosphate + H(+). Its pathway is amino-acid biosynthesis; L-histidine biosynthesis; L-histidine from 5-phospho-alpha-D-ribose 1-diphosphate: step 2/9. In Agrobacterium fabrum (strain C58 / ATCC 33970) (Agrobacterium tumefaciens (strain C58)), this protein is Phosphoribosyl-ATP pyrophosphatase (hisE).